The following is a 314-amino-acid chain: Homoserine O-acetyltransferase (314 aa).

The active-site Acyl-thioester intermediate is the cysteine 142. The substrate site is built by lysine 163 and serine 192. Histidine 235 acts as the Proton acceptor in catalysis. Residue glutamate 237 is part of the active site. Arginine 249 lines the substrate pocket.

The protein belongs to the MetA family.

It is found in the cytoplasm. The catalysed reaction is L-homoserine + acetyl-CoA = O-acetyl-L-homoserine + CoA. The protein operates within amino-acid biosynthesis; L-methionine biosynthesis via de novo pathway; O-acetyl-L-homoserine from L-homoserine: step 1/1. Its function is as follows. Transfers an acetyl group from acetyl-CoA to L-homoserine, forming acetyl-L-homoserine. This is Homoserine O-acetyltransferase from Streptococcus thermophilus (strain ATCC BAA-491 / LMD-9).